Reading from the N-terminus, the 55-residue chain is ATP synthase F(0) complex subunit 8 (55 aa).

The chain crosses the membrane as a helical span at residues Leu4–Ile24. Residues Glu36–His55 are disordered.

Belongs to the ATPase protein 8 family. As to quaternary structure, component of the ATP synthase complex composed at least of ATP5F1A/subunit alpha, ATP5F1B/subunit beta, ATP5MC1/subunit c (homooctomer), MT-ATP6/subunit a, MT-ATP8/subunit 8, ATP5ME/subunit e, ATP5MF/subunit f, ATP5MG/subunit g, ATP5MK/subunit k, ATP5MJ/subunit j, ATP5F1C/subunit gamma, ATP5F1D/subunit delta, ATP5F1E/subunit epsilon, ATP5PF/subunit F6, ATP5PB/subunit b, ATP5PD/subunit d, ATP5PO/subunit OSCP. ATP synthase complex consists of a soluble F(1) head domain (subunits alpha(3) and beta(3)) - the catalytic core - and a membrane F(0) domain - the membrane proton channel (subunits c, a, 8, e, f, g, k and j). These two domains are linked by a central stalk (subunits gamma, delta, and epsilon) rotating inside the F1 region and a stationary peripheral stalk (subunits F6, b, d, and OSCP).

It is found in the mitochondrion membrane. Functionally, subunit 8, of the mitochondrial membrane ATP synthase complex (F(1)F(0) ATP synthase or Complex V) that produces ATP from ADP in the presence of a proton gradient across the membrane which is generated by electron transport complexes of the respiratory chain. ATP synthase complex consist of a soluble F(1) head domain - the catalytic core - and a membrane F(1) domain - the membrane proton channel. These two domains are linked by a central stalk rotating inside the F(1) region and a stationary peripheral stalk. During catalysis, ATP synthesis in the catalytic domain of F(1) is coupled via a rotary mechanism of the central stalk subunits to proton translocation. In vivo, can only synthesize ATP although its ATP hydrolase activity can be activated artificially in vitro. Part of the complex F(0) domain. This Salvelinus alpinus (Arctic char) protein is ATP synthase F(0) complex subunit 8.